Reading from the N-terminus, the 440-residue chain is Serine hydroxymethyltransferase (440 aa).

(6S)-5,6,7,8-tetrahydrofolate is bound by residues leucine 119 and 123 to 125 (GHL). At lysine 228 the chain carries N6-(pyridoxal phosphate)lysine. 370–372 (SPF) contributes to the (6S)-5,6,7,8-tetrahydrofolate binding site.

It belongs to the SHMT family. Homodimer. Pyridoxal 5'-phosphate serves as cofactor.

Its subcellular location is the cytoplasm. It catalyses the reaction (6R)-5,10-methylene-5,6,7,8-tetrahydrofolate + glycine + H2O = (6S)-5,6,7,8-tetrahydrofolate + L-serine. It participates in one-carbon metabolism; tetrahydrofolate interconversion. The protein operates within amino-acid biosynthesis; glycine biosynthesis; glycine from L-serine: step 1/1. In terms of biological role, catalyzes the reversible interconversion of serine and glycine with tetrahydrofolate (THF) serving as the one-carbon carrier. This reaction serves as the major source of one-carbon groups required for the biosynthesis of purines, thymidylate, methionine, and other important biomolecules. Also exhibits THF-independent aldolase activity toward beta-hydroxyamino acids, producing glycine and aldehydes, via a retro-aldol mechanism. The sequence is that of Serine hydroxymethyltransferase from Chlorobium luteolum (strain DSM 273 / BCRC 81028 / 2530) (Pelodictyon luteolum).